Here is a 149-residue protein sequence, read N- to C-terminus: MRAVVQRVISSKVEVDGKVIGSIGKGLNVLLGISKEDTEEDIKYLKEKIINLRIFEDENEKLNKSLLDIGGDIIIVSQFTLYGDCRKGRRPSFIEALGGEEAYILYNKFVESIKKEVNNVATGEFGADMKVYIENDGPVTILLDSKKTF.

A Gly-cisPro motif, important for rejection of L-amino acids motif is present at residues 137-138 (GP).

Belongs to the DTD family. In terms of assembly, homodimer.

Its subcellular location is the cytoplasm. The catalysed reaction is glycyl-tRNA(Ala) + H2O = tRNA(Ala) + glycine + H(+). It carries out the reaction a D-aminoacyl-tRNA + H2O = a tRNA + a D-alpha-amino acid + H(+). Its function is as follows. An aminoacyl-tRNA editing enzyme that deacylates mischarged D-aminoacyl-tRNAs. Also deacylates mischarged glycyl-tRNA(Ala), protecting cells against glycine mischarging by AlaRS. Acts via tRNA-based rather than protein-based catalysis; rejects L-amino acids rather than detecting D-amino acids in the active site. By recycling D-aminoacyl-tRNA to D-amino acids and free tRNA molecules, this enzyme counteracts the toxicity associated with the formation of D-aminoacyl-tRNA entities in vivo and helps enforce protein L-homochirality. This Clostridium botulinum (strain Kyoto / Type A2) protein is D-aminoacyl-tRNA deacylase.